Reading from the N-terminus, the 1002-residue chain is ToxR-activated gene A lipoprotein (1002 aa).

Residues 1–21 (MVVRYSLLMKVSFAILIFLVG) form the signal peptide. The N-palmitoyl cysteine moiety is linked to residue C22. C22 is lipidated: S-diacylglycerol cysteine. The interval 31–53 (DQYLTDPDISEQTKKPSRPIIDE) is disordered. One can recognise a Fibronectin type-III domain in the interval 45–139 (KPSRPIIDEK…KIEFITLNEI (95 aa)). Positions 282–536 (ELIIQNIDLG…QDWLKNGAVV (255 aa)) constitute a Peptidase M66 domain. H432 contributes to the Zn(2+) binding site. Residue E433 is part of the active site. H436 and H442 together coordinate Zn(2+).

The cofactor is Zn(2+).

The protein localises to the cell membrane. This chain is ToxR-activated gene A lipoprotein (tagA), found in Vibrio cholerae serotype O1 (strain ATCC 39315 / El Tor Inaba N16961).